A 126-amino-acid chain; its full sequence is Large ribosomal subunit protein uL22 (126 aa).

It belongs to the universal ribosomal protein uL22 family. In terms of assembly, part of the 50S ribosomal subunit.

In terms of biological role, this protein binds specifically to 23S rRNA; its binding is stimulated by other ribosomal proteins, e.g. L4, L17, and L20. It is important during the early stages of 50S assembly. It makes multiple contacts with different domains of the 23S rRNA in the assembled 50S subunit and ribosome. Functionally, the globular domain of the protein is located near the polypeptide exit tunnel on the outside of the subunit, while an extended beta-hairpin is found that lines the wall of the exit tunnel in the center of the 70S ribosome. The polypeptide is Large ribosomal subunit protein uL22 (Phenylobacterium zucineum (strain HLK1)).